The sequence spans 256 residues: Putative cysteine-rich repeat secretory protein 21 (256 aa).

Positions 1–30 (MYSSVSKRLVSVHILVVVALQLLFIPNVLS) are cleaved as a signal peptide. 2 Gnk2-homologous domains span residues 37–139 (YLHH…SIDT) and 145–253 (YQNN…LYPF).

The protein belongs to the cysteine-rich repeat secretory protein family.

Its subcellular location is the secreted. The polypeptide is Putative cysteine-rich repeat secretory protein 21 (CRRSP21) (Arabidopsis thaliana (Mouse-ear cress)).